A 321-amino-acid polypeptide reads, in one-letter code: Chloroplastic calcium uniporter protein (321 aa).

The transit peptide at 1–56 (MSSKKSLVQSLFNISKTYSRISGLTRMRPTKSGGIPPDAGDSGIRRRFLHKRAFFS) directs the protein to the chloroplast. 2 helical membrane passes run 223–243 (LWAGLGLIMAQTVGFFRLTFW) and 249–269 (VMEPICFYVTSTYFMAGYAFF). The Selectivity filter motif lies at 247–255 (WDVMEPICF). Glu251 provides a ligand contact to Ca(2+).

This sequence belongs to the MCU (TC 1.A.77) family.

Its subcellular location is the plastid. The protein resides in the chloroplast membrane. The catalysed reaction is Ca(2+)(in) = Ca(2+)(out). Chloroplastic membrane calcium uniporter that mediates calcium uptake into chloroplast stroma. Constitutes a pore-forming and calcium-conducting subunit. Chloroplastic calcium homeostasis plays key roles in cellular physiology. Promotes calcium uptake into chloroplast stroma in response to osmotic-stress, fine-tuning cytosolic MAPK3/MAPK6 phosphorylation and affecting stomata opening. The sequence is that of Chloroplastic calcium uniporter protein from Arabidopsis thaliana (Mouse-ear cress).